A 329-amino-acid chain; its full sequence is DNA-directed RNA polymerase subunit alpha (329 aa).

An alpha N-terminal domain (alpha-NTD) region spans residues 1–234; it reads MQGSVTEFLK…EQLDAFVELR (234 aa). The interval 248-329 is alpha C-terminal domain (alpha-CTD); sequence FDPILLRPVD…WPPASLVDDL (82 aa).

This sequence belongs to the RNA polymerase alpha chain family. In terms of assembly, homodimer. The RNAP catalytic core consists of 2 alpha, 1 beta, 1 beta' and 1 omega subunit. When a sigma factor is associated with the core the holoenzyme is formed, which can initiate transcription.

The enzyme catalyses RNA(n) + a ribonucleoside 5'-triphosphate = RNA(n+1) + diphosphate. In terms of biological role, DNA-dependent RNA polymerase catalyzes the transcription of DNA into RNA using the four ribonucleoside triphosphates as substrates. In Shewanella denitrificans (strain OS217 / ATCC BAA-1090 / DSM 15013), this protein is DNA-directed RNA polymerase subunit alpha.